A 224-amino-acid polypeptide reads, in one-letter code: Ribonuclease T (224 aa).

A compositionally biased stretch (acidic residues) spans 1-11; that stretch reads MSEDLYEDDLD. Residues 1 to 22 are disordered; it reads MSEDLYEDDLDTQGSSGPRHPM. The Exonuclease domain occupies 32–206; the sequence is VVVDVETGGF…YDTEKTAELF (175 aa). Aspartate 35, glutamate 37, histidine 193, and aspartate 198 together coordinate Mg(2+). The active-site Proton donor/acceptor is histidine 193.

Belongs to the RNase T family. Homodimer. Mg(2+) is required as a cofactor.

Trims short 3' overhangs of a variety of RNA species, leaving a one or two nucleotide 3' overhang. Responsible for the end-turnover of tRNA: specifically removes the terminal AMP residue from uncharged tRNA (tRNA-C-C-A). Also appears to be involved in tRNA biosynthesis. The sequence is that of Ribonuclease T from Pseudomonas putida (strain ATCC 700007 / DSM 6899 / JCM 31910 / BCRC 17059 / LMG 24140 / F1).